A 263-amino-acid polypeptide reads, in one-letter code: Aminoglycoside 3'-phosphotransferase (263 aa).

Aspartate 183 functions as the Proton acceptor in the catalytic mechanism.

It belongs to the aminoglycoside phosphotransferase family.

It catalyses the reaction kanamycin A + ATP = kanamycin 3'-phosphate + ADP + H(+). Resistance to kanamycin and structurally-related aminoglycosides, including amikacin. This Streptomyces ribosidificus protein is Aminoglycoside 3'-phosphotransferase (rph).